Here is a 493-residue protein sequence, read N- to C-terminus: Stage V sporulation protein AF (493 aa).

A run of 5 helical transmembrane segments spans residues 296–316, 334–354, 363–383, 387–407, and 418–438; these read FFGI…VLQP, IPII…RMAA, TAMG…VGLF, VILY…YELS, and MILV…VLII.

This sequence belongs to the GerABKA family.

It localises to the cell membrane. The sequence is that of Stage V sporulation protein AF (spoVAF) from Bacillus subtilis (strain 168).